A 187-amino-acid polypeptide reads, in one-letter code: Calmodulin-like protein 30 (187 aa).

Positions 21–47 (KPSRMFSRDRQSSGLSSPGPGGFSQPS) are disordered. Low complexity predominate over residues 32-47 (SSGLSSPGPGGFSQPS). EF-hand domains follow at residues 46–81 (PSVN…LGQE), 82–117 (RAIE…SGGI), 129–152 (FDLN…LGER), and 153–187 (CSLE…SNNV). 18 residues coordinate Ca(2+): Asp59, Asp61, Asp63, Lys65, Glu70, Asp95, Asp97, Asp99, Glu106, Asp130, Asn132, Asp134, Lys136, Glu141, Asp166, Asp168, Asp170, and Glu177.

Belongs to the calmodulin family.

Its function is as follows. Potential calcium sensor. The polypeptide is Calmodulin-like protein 30 (Arabidopsis thaliana (Mouse-ear cress)).